A 105-amino-acid polypeptide reads, in one-letter code: uncharacterized protein (105 aa).

The Hcy-binding domain maps to 1 to 101; that stretch reads MMDLGDKINP…KDIQEISAAV (101 aa).

This is an uncharacterized protein from Saccharomyces cerevisiae (strain ATCC 204508 / S288c) (Baker's yeast).